The sequence spans 877 residues: Probable sulfate permease C3H7.02 (877 aa).

13 helical membrane passes run 133 to 153, 161 to 181, 186 to 206, 221 to 241, 243 to 263, 292 to 312, 329 to 349, 384 to 404, 424 to 444, 461 to 481, 484 to 504, 518 to 538, and 543 to 563; these read WLVY…PQGM, LPAQ…CIFA, VSIG…ANVQ, LALL…GFII, FIPV…IMAG, LPHT…LYLV, VFFL…TAIS, LCAD…LEHI, LIAM…PATG, LGGI…TGAF, IPNA…IIPW, ALIF…NGIY, and LSAA…LGIL. One can recognise an STAS domain in the interval 594 to 747; that stretch reads NLTVRDPPAG…SRSIEVGSAA (154 aa). Disordered regions lie at residues 643 to 663 and 793 to 821; these read KASD…APEV and ADSD…TFSH. Residues 801–821 show a composition bias toward basic and acidic residues; the sequence is SDDKDKKVEGHRPSQDPTFSH.

This sequence belongs to the SLC26A/SulP transporter (TC 2.A.53) family.

It is found in the membrane. In terms of biological role, high affinity uptake of sulfate into the cell. The sequence is that of Probable sulfate permease C3H7.02 from Schizosaccharomyces pombe (strain 972 / ATCC 24843) (Fission yeast).